The chain runs to 439 residues: Kinesin-like protein KIN-13 (439 aa).

Residue 1-5 coordinates ATP; sequence GSGKS. Residues 1 to 240 enclose the Kinesin motor domain; sequence GSGKSFTMMH…LRYADRVKEL (240 aa).

It belongs to the TRAFAC class myosin-kinesin ATPase superfamily. Kinesin family. KIN-13 subfamily. In terms of assembly, interacts with PLK. In terms of processing, phosphorylated by PLK.

Its subcellular location is the cytoplasm. The protein resides in the cytoskeleton. It localises to the cell projection. The protein localises to the cilium. It is found in the flagellum. Its subcellular location is the flagellum basal body. The protein resides in the flagellum axoneme. It localises to the spindle. The protein localises to the chromosome. It is found in the centromere. Its subcellular location is the kinetochore. Involved in cell cycle. Involved in formation of flagella, regulation of flagellar length, and formation of median bodies during interphase. Regulates flagellar length in all eight distal flagellar tips by promoting disassembly of the microtubules. Disassembles microtubules at the distal flagellar tips in a length-dependent manner in order to maintain different equilibrium lengths of the four flagellar pairs. Regulates interphase and mitotic microtubule dynamics. Regulates microtubule disassembly dynamics of the dual mitotic spindles and the median body. This Giardia intestinalis (Giardia lamblia) protein is Kinesin-like protein KIN-13.